A 256-amino-acid chain; its full sequence is Probable sulfite/organosulfonate exporter TauE (256 aa).

8 consecutive transmembrane segments (helical) span residues 5–25 (LLLP…FQTV), 33–53 (IVMG…AAVV), 76–96 (AVAA…LVLE), 103–123 (ATLL…SAAL), 142–162 (VFGG…IFQF), 172–190 (IRCA…RTLF), 199–219 (AAVC…TLLG), and 236–256 (FGVL…AWVL).

The protein belongs to the 4-toluene sulfonate uptake permease (TSUP) (TC 2.A.102) family.

Its subcellular location is the cell inner membrane. Functionally, could be a sulfite/organosulfonate exporter with a wide substrate range, including 3-sulfolactate and 3-sulfopyruvate. This chain is Probable sulfite/organosulfonate exporter TauE, found in Cupriavidus necator (strain ATCC 17699 / DSM 428 / KCTC 22496 / NCIMB 10442 / H16 / Stanier 337) (Ralstonia eutropha).